We begin with the raw amino-acid sequence, 259 residues long: DNA-directed RNA polymerase 30 kDa polypeptide (259 aa).

Residues 155 to 195 (YNTPCPNCKSRNTTPMMIQTRAADEPPLVRHACRDCKQHFK) form a TFIIS-type zinc finger. The Zn(2+) site is built by Cys-159, Cys-162, Cys-187, and Cys-190. Residues 220 to 259 (EILPDNNPSPPESPEPASPIDDGLIRATFDRNDEPPEDDE) are disordered. The segment covering 226 to 236 (NPSPPESPEPA) has biased composition (pro residues).

This sequence belongs to the poxviridae DNA-directed RNA polymerase 30 kDa subunit family. In terms of assembly, the DNA-dependent RNA polymerase (vRNAP) consists of eight subunits encoded by early viral genes and termed according to their apparent molecular masses Rpo147, Rpo132, Rpo35, Rpo30, Rpo22, Rpo19, Rpo18, and Rpo7. The same holoenzyme, with the addition of the transcription-specificity factor RAP94, is used for early gene expression.

It localises to the virion. Its subcellular location is the host cytoplasm. The enzyme catalyses RNA(n) + a ribonucleoside 5'-triphosphate = RNA(n+1) + diphosphate. Functionally, part of the DNA-dependent RNA polymerase which catalyzes the transcription of viral DNA into RNA using the four ribonucleoside triphosphates as substrates. Responsible for the transcription of early, intermediate and late genes. DNA-dependent RNA polymerase associates with the early transcription factor (ETF), itself composed of OPG118 and OPG134, thereby allowing the early genes transcription. Late transcription, and probably also intermediate transcription, require newly synthesized RNA polymerase. This is DNA-directed RNA polymerase 30 kDa polypeptide (OPG066) from Bos taurus (Bovine).